Consider the following 597-residue polypeptide: uncharacterized protein (597 aa).

The PWWP domain occupies 16–78 (VGRLVWVRRR…LENSKTVKAF (63 aa)). 2 disordered regions span residues 126–210 (NLCN…MRGL) and 449–482 (QLKGKRNSRQMSKKQEERRNVYGEEANNNSSTPH). Residues 134–143 (EDSKRCLSGK) show a composition bias toward basic and acidic residues. The span at 144–161 (EDEDSGSSDAEETEDDEL) shows a compositional bias: acidic residues. The segment covering 166 to 185 (EQLQSSISSQEMNNVGASKV) has biased composition (polar residues). A compositionally biased stretch (basic residues) spans 450 to 460 (LKGKRNSRQMS). Positions 461–470 (KKQEERRNVY) are enriched in basic and acidic residues.

This is an uncharacterized protein from Arabidopsis thaliana (Mouse-ear cress).